We begin with the raw amino-acid sequence, 334 residues long: Glycerol-3-phosphate dehydrogenase [NAD(P)+] (334 aa).

Positions 13, 33, and 106 each coordinate NADPH. Sn-glycerol 3-phosphate-binding residues include lysine 106, glycine 137, and serine 139. Alanine 141 is an NADPH binding site. The sn-glycerol 3-phosphate site is built by lysine 192, aspartate 245, serine 255, arginine 256, and asparagine 257. Residue lysine 192 is the Proton acceptor of the active site. Arginine 256 is an NADPH binding site. NADPH is bound by residues valine 280 and glutamate 282.

The protein belongs to the NAD-dependent glycerol-3-phosphate dehydrogenase family.

Its subcellular location is the cytoplasm. It catalyses the reaction sn-glycerol 3-phosphate + NAD(+) = dihydroxyacetone phosphate + NADH + H(+). The enzyme catalyses sn-glycerol 3-phosphate + NADP(+) = dihydroxyacetone phosphate + NADPH + H(+). It functions in the pathway membrane lipid metabolism; glycerophospholipid metabolism. Functionally, catalyzes the reduction of the glycolytic intermediate dihydroxyacetone phosphate (DHAP) to sn-glycerol 3-phosphate (G3P), the key precursor for phospholipid synthesis. The polypeptide is Glycerol-3-phosphate dehydrogenase [NAD(P)+] (Chlamydia abortus (strain DSM 27085 / S26/3) (Chlamydophila abortus)).